A 967-amino-acid polypeptide reads, in one-letter code: Leucine--tRNA ligase (967 aa).

The 'HIGH' region motif lies at 43-53 (PYLSGHLHVGH). A 'KMSKS' region motif is present at residues 650 to 654 (KMSKS). Residue K653 participates in ATP binding.

Belongs to the class-I aminoacyl-tRNA synthetase family.

The protein localises to the cytoplasm. The catalysed reaction is tRNA(Leu) + L-leucine + ATP = L-leucyl-tRNA(Leu) + AMP + diphosphate. The chain is Leucine--tRNA ligase from Thermococcus onnurineus (strain NA1).